The following is a 282-amino-acid chain: Shikimate dehydrogenase (NADP(+)) (282 aa).

Shikimate contacts are provided by residues 19 to 21 and threonine 66; that span reads TQS. Residue lysine 70 is the Proton acceptor of the active site. 2 residues coordinate shikimate: asparagine 91 and aspartate 107. Residues 132 to 136, 155 to 160, isoleucine 224, and glycine 246 each bind NADP(+); these read GAGGA and NRTITR.

The protein belongs to the shikimate dehydrogenase family. In terms of assembly, homodimer.

It carries out the reaction shikimate + NADP(+) = 3-dehydroshikimate + NADPH + H(+). Its pathway is metabolic intermediate biosynthesis; chorismate biosynthesis; chorismate from D-erythrose 4-phosphate and phosphoenolpyruvate: step 4/7. Functionally, involved in the biosynthesis of the chorismate, which leads to the biosynthesis of aromatic amino acids. Catalyzes the reversible NADPH linked reduction of 3-dehydroshikimate (DHSA) to yield shikimate (SA). This chain is Shikimate dehydrogenase (NADP(+)), found in Buchnera aphidicola subsp. Baizongia pistaciae (strain Bp).